A 334-amino-acid chain; its full sequence is Rhomboid-like protein 14, mitochondrial (334 aa).

The N-terminal 87 residues, 1-87 (MENFGEGRRS…RLFLSAFYHV (87 aa)), are a transit peptide targeting the mitochondrion. The next 4 helical transmembrane spans lie at 114–134 (EFASMVFTLIGMSQGVTLLLA), 146–166 (AYYNEYAVGFSGVLFAMKVVL), 176–196 (VYGILVPTKYAAWAELILVQM), and 197–217 (FVPNASFLGHLGGILAGIIYL). Serine 156 acts as the Nucleophile in catalysis. The Charge relay system role is filled by histidine 206. The segment at 273–302 (GPGIWRCQSCTYDNSGWLSACEMCGSGRAR) adopts a RanBP2-type zinc-finger fold.

Belongs to the peptidase S54 family.

It localises to the mitochondrion membrane. In terms of biological role, probable rhomboid-type serine protease that catalyzes intramembrane proteolysis. May function in the heat-shock response pathway. The protein is Rhomboid-like protein 14, mitochondrial of Arabidopsis thaliana (Mouse-ear cress).